A 97-amino-acid chain; its full sequence is NADH-quinone oxidoreductase subunit K (97 aa).

A run of 3 helical transmembrane segments spans residues 1–21, 25–45, and 57–77; these read MSEYLILCSILFSLGAFGVLY, ILVMFMCIELMLNSVNLLMVY, and VFVFFIMAVAAAEITIGLAIL.

This sequence belongs to the complex I subunit 4L family. As to quaternary structure, NDH-1 is composed of 14 different subunits. Subunits NuoA, H, J, K, L, M, N constitute the membrane sector of the complex.

It is found in the cell inner membrane. The enzyme catalyses a quinone + NADH + 5 H(+)(in) = a quinol + NAD(+) + 4 H(+)(out). Functionally, NDH-1 shuttles electrons from NADH, via FMN and iron-sulfur (Fe-S) centers, to quinones in the respiratory chain. The immediate electron acceptor for the enzyme in this species is believed to be a menaquinone. Couples the redox reaction to proton translocation (for every two electrons transferred, four hydrogen ions are translocated across the cytoplasmic membrane), and thus conserves the redox energy in a proton gradient. This chain is NADH-quinone oxidoreductase subunit K, found in Cytophaga hutchinsonii (strain ATCC 33406 / DSM 1761 / CIP 103989 / NBRC 15051 / NCIMB 9469 / D465).